We begin with the raw amino-acid sequence, 492 residues long: MGAGGPRRGAGPPDGGWGWVVLGACFVVTGFAYGFPKAVSVFFRELKRDFGAGYSDTAWVSSIMLAMLYGTGPLSSILVTRFGCRPVMLAGGLLASAGMILASFASRLVELYLTAGVLTGLGLALNFQPSLIMLGLYFERRRPLANGLAAAGSPVFLSMLSPLGQLLGERFGWRGGFLLFGGLLLHCCACGAVMRPPPGPPPRRDPSPHGGPARRRRLLDVAVCTDRAFVVYVVTKFLMALGLFVPAILLVNYAKDAGVPDAEAAFLLSIVGFVDIVARPACGALAGLGRLRPHVPYLFSLALLANGLTDLISARARSYGTLVAFCIAFGLSYGMVGALQFEVLMATVGAPRFPSALGLVLLVEAVAVLIGPPSAGRLVDALKNYEIIFYLAGSEVALAGVFMAVTTYCCLRCSKNISSGRSAEGGASDPEDVEAERDSEPMPASTEEPGSLEALEVLSPRAGSPEQEPEEEAVPELDHESIGGHEARGQKA.

Over 1–14 (MGAGGPRRGAGPPD) the chain is Cytoplasmic. Residues 15–35 (GGWGWVVLGACFVVTGFAYGF) traverse the membrane as a helical segment. Residues 36–58 (PKAVSVFFRELKRDFGAGYSDTA) lie on the Extracellular side of the membrane. The chain crosses the membrane as a helical span at residues 59–79 (WVSSIMLAMLYGTGPLSSILV). Residues 80–85 (TRFGCR) lie on the Cytoplasmic side of the membrane. Residues 86-106 (PVMLAGGLLASAGMILASFAS) form a helical membrane-spanning segment. Residues 107–115 (RLVELYLTA) are Extracellular-facing. The helical transmembrane segment at 116–136 (GVLTGLGLALNFQPSLIMLGL) threads the bilayer. Topologically, residues 137–146 (YFERRRPLAN) are cytoplasmic. Residues 147-167 (GLAAAGSPVFLSMLSPLGQLL) traverse the membrane as a helical segment. Over 168-172 (GERFG) the chain is Extracellular. A helical membrane pass occupies residues 173–193 (WRGGFLLFGGLLLHCCACGAV). The Cytoplasmic portion of the chain corresponds to 194–228 (MRPPPGPPPRRDPSPHGGPARRRRLLDVAVCTDRA). The chain crosses the membrane as a helical span at residues 229 to 249 (FVVYVVTKFLMALGLFVPAIL). At 250 to 257 (LVNYAKDA) the chain is on the extracellular side. Residues 258 to 278 (GVPDAEAAFLLSIVGFVDIVA) traverse the membrane as a helical segment. Topologically, residues 279–293 (RPACGALAGLGRLRP) are cytoplasmic. The chain crosses the membrane as a helical span at residues 294 to 314 (HVPYLFSLALLANGLTDLISA). Over 315 to 318 (RARS) the chain is Extracellular. The helical transmembrane segment at 319–339 (YGTLVAFCIAFGLSYGMVGAL) threads the bilayer. The Cytoplasmic portion of the chain corresponds to 340–352 (QFEVLMATVGAPR). The helical transmembrane segment at 353–373 (FPSALGLVLLVEAVAVLIGPP) threads the bilayer. Over 374-386 (SAGRLVDALKNYE) the chain is Extracellular. Residues 387–407 (IIFYLAGSEVALAGVFMAVTT) traverse the membrane as a helical segment. Over 408–492 (YCCLRCSKNI…GGHEARGQKA (85 aa)) the chain is Cytoplasmic. The tract at residues 419 to 492 (SGRSAEGGAS…GGHEARGQKA (74 aa)) is disordered. 2 basolateral sorting signal regions span residues 426 to 460 (GASD…VLSP) and 461 to 482 (RAGS…HESI). The segment covering 476-492 (ELDHESIGGHEARGQKA) has biased composition (basic and acidic residues).

The protein belongs to the major facilitator superfamily. Monocarboxylate porter (TC 2.A.1.13) family. In terms of tissue distribution, expressed exclusively in retinal pigment epithelium and choroid plexus epithelium.

Its subcellular location is the basolateral cell membrane. The enzyme catalyses (S)-lactate(in) + H(+)(in) = (S)-lactate(out) + H(+)(out). Functionally, probable retinal pigment epithelium (RPE)-specific proton-coupled L-lactate transporter. May facilitate transport of lactate and H(+) out of the retina and could therefore play an essential role in maintenance of metabolic and ionic homeostasis of the outer retina. This is Monocarboxylate transporter 3 (Slc16a8) from Mus musculus (Mouse).